A 113-amino-acid polypeptide reads, in one-letter code: Hydrogenase maturation factor HypA (113 aa).

Ni(2+) is bound at residue H2. Residues C70, C73, C86, and C88 each coordinate Zn(2+).

This sequence belongs to the HypA/HybF family.

Functionally, involved in the maturation of [NiFe] hydrogenases. Required for nickel insertion into the metal center of the hydrogenase. This is Hydrogenase maturation factor HypA from Trichormus variabilis (strain ATCC 29413 / PCC 7937) (Anabaena variabilis).